The chain runs to 152 residues: Superoxide dismutase [Cu-Zn] (152 aa).

His-45, His-47, and His-62 together coordinate Cu cation. An intrachain disulfide couples Cys-56 to Cys-145. Zn(2+) is bound by residues His-62, His-70, His-79, and Asp-82. Residue His-119 participates in Cu cation binding.

It belongs to the Cu-Zn superoxide dismutase family. In terms of assembly, homodimer. Cu cation is required as a cofactor. It depends on Zn(2+) as a cofactor.

The protein resides in the cytoplasm. The enzyme catalyses 2 superoxide + 2 H(+) = H2O2 + O2. Its function is as follows. Destroys radicals which are normally produced within the cells and which are toxic to biological systems. The sequence is that of Superoxide dismutase [Cu-Zn] (SODCC) from Nicotiana plumbaginifolia (Leadwort-leaved tobacco).